The primary structure comprises 211 residues: Peptidyl-prolyl cis-trans isomerase FKBP14 (211 aa).

Residues 1–19 (MRFFLWNAILALWVTVLSG) form the signal peptide. A disulfide bridge links Cys38 with Cys96. Residues 45 to 135 (GDLMLVHYEG…IFNIDLLEIR (91 aa)) enclose the PPIase FKBP-type domain. An EF-hand 1 domain is found at 135–170 (RNGPRSHESFQEMDLNDDWRLSKHEVKVYLQKEFEK). Residues Asp148, Asn150, Asp152, Arg154, and Glu159 each coordinate Ca(2+). Residue Asn176 is glycosylated (N-linked (GlcNAc...) asparagine). Residues 179 to 211 (HHDALVEDIFDKEDEDKDGFISAREFTYVHDEL) form the EF-hand 2 domain. Ca(2+)-binding residues include Asp192, Asp194, Asp196, and Glu203. The short motif at 208–211 (HDEL) is the Prevents secretion from ER element.

Monomer. Homodimer. Interacts with type III, type IV and type X collagens.

It localises to the endoplasmic reticulum lumen. The enzyme catalyses [protein]-peptidylproline (omega=180) = [protein]-peptidylproline (omega=0). With respect to regulation, inhibited by tacrolimus/FK506. Its function is as follows. PPIase which accelerates the folding of proteins during protein synthesis. Has a preference for substrates containing 4-hydroxylproline modifications, including type III collagen. May also target type VI and type X collagens. This chain is Peptidyl-prolyl cis-trans isomerase FKBP14 (Fkbp14), found in Mus musculus (Mouse).